The following is a 358-amino-acid chain: UDP-N-acetylglucosamine--N-acetylmuramyl-(pentapeptide) pyrophosphoryl-undecaprenol N-acetylglucosamine transferase (358 aa).

UDP-N-acetyl-alpha-D-glucosamine contacts are provided by residues 11–13, Arg163, Ser191, Ile245, and Gln290; that span reads TGG.

The protein belongs to the glycosyltransferase 28 family. MurG subfamily.

The protein localises to the cell inner membrane. It carries out the reaction di-trans,octa-cis-undecaprenyl diphospho-N-acetyl-alpha-D-muramoyl-L-alanyl-D-glutamyl-meso-2,6-diaminopimeloyl-D-alanyl-D-alanine + UDP-N-acetyl-alpha-D-glucosamine = di-trans,octa-cis-undecaprenyl diphospho-[N-acetyl-alpha-D-glucosaminyl-(1-&gt;4)]-N-acetyl-alpha-D-muramoyl-L-alanyl-D-glutamyl-meso-2,6-diaminopimeloyl-D-alanyl-D-alanine + UDP + H(+). It participates in cell wall biogenesis; peptidoglycan biosynthesis. In terms of biological role, cell wall formation. Catalyzes the transfer of a GlcNAc subunit on undecaprenyl-pyrophosphoryl-MurNAc-pentapeptide (lipid intermediate I) to form undecaprenyl-pyrophosphoryl-MurNAc-(pentapeptide)GlcNAc (lipid intermediate II). This chain is UDP-N-acetylglucosamine--N-acetylmuramyl-(pentapeptide) pyrophosphoryl-undecaprenol N-acetylglucosamine transferase, found in Herminiimonas arsenicoxydans.